The chain runs to 213 residues: MFFQPLNALSLCASLSSFSSSTLTSFAFISGTLSSFALCFNSMPFSSATLLISSSTLSLSTSMASEFTPISSYTLTLVSKSSNCCSNLSIIMVICWRFIFCNALSMPLQTCPIDADTCLIVTAVCTLDATESTRDANFNSCNLSFFFLIALDAYIRDISSFSLRARLSLLVSCFSSFEALLACFCNCFDVNFSWKRVFSKPAAELRDISQCDV.

This is an uncharacterized protein from Saccharomyces cerevisiae (strain ATCC 204508 / S288c) (Baker's yeast).